Consider the following 96-residue polypeptide: Co-chaperonin GroES 2 (96 aa).

Belongs to the GroES chaperonin family. In terms of assembly, heptamer of 7 subunits arranged in a ring. Interacts with the chaperonin GroEL.

It is found in the cytoplasm. Functionally, together with the chaperonin GroEL, plays an essential role in assisting protein folding. The GroEL-GroES system forms a nano-cage that allows encapsulation of the non-native substrate proteins and provides a physical environment optimized to promote and accelerate protein folding. GroES binds to the apical surface of the GroEL ring, thereby capping the opening of the GroEL channel. This is Co-chaperonin GroES 2 from Vibrio cholerae serotype O1 (strain ATCC 39315 / El Tor Inaba N16961).